A 421-amino-acid polypeptide reads, in one-letter code: Phosphoglycerate kinase, cytosolic (421 aa).

Residues Val-23, Asp-24, Phe-25, Asn-26, Arg-39, Ser-61, His-62, Gly-64, Arg-65, Arg-135, His-172, and Arg-173 each coordinate (2R)-3-phosphoglycerate. Residues Gly-218 and Ala-219 each contribute to the ADP site. Gly-218 is a binding site for CDP. Residues Ala-219 and Lys-220 each contribute to the AMP site. Ala-219 serves as a coordination point for ATP. Ala-219 contacts Mg(2+). Lys-220 is a (2R)-3-phosphoglycerate binding site. Asp-223 contributes to the CDP binding site. Asp-223 provides a ligand contact to Mg(2+). Residues Lys-224 and Gly-242 each contribute to the ADP site. Lys-224 serves as a coordination point for AMP. ATP is bound at residue Lys-224. Gly-242 contributes to the CDP binding site. AMP contacts are provided by Ala-243 and Ala-315. 2 residues coordinate ATP: Ala-243 and Ala-315. Residues Ala-315 and Asn-339 each contribute to the ADP site. 2 residues coordinate CDP: Gly-340 and Phe-345. Residues Phe-345, Glu-346, Asp-378, and Ser-379 each contribute to the ADP site. Residue Glu-346 participates in AMP binding. Positions 346, 378, and 379 each coordinate ATP. Position 378 (Asp-378) interacts with Mg(2+).

Belongs to the phosphoglycerate kinase family. In terms of assembly, monomer. The cofactor is Mg(2+).

The protein resides in the cytoplasm. The enzyme catalyses (2R)-3-phosphoglycerate + ATP = (2R)-3-phospho-glyceroyl phosphate + ADP. Its pathway is carbohydrate degradation; glycolysis; pyruvate from D-glyceraldehyde 3-phosphate: step 2/5. The protein is Phosphoglycerate kinase, cytosolic of Trypanosoma brucei brucei.